A 355-amino-acid chain; its full sequence is Putative inositol monophosphatase 3 (355 aa).

A helical transmembrane segment spans residues 16 to 36; that stretch reads VPATIFAILLTIVLVYFLNFH. Positions 127, 167, 169, 170, and 292 each coordinate Mg(2+). Residue E127 participates in substrate binding. Substrate is bound by residues 169-172 and D292; that span reads LDAT.

This sequence belongs to the inositol monophosphatase superfamily. It depends on Mg(2+) as a cofactor.

It localises to the membrane. The enzyme catalyses a myo-inositol phosphate + H2O = myo-inositol + phosphate. Its pathway is polyol metabolism; myo-inositol biosynthesis; myo-inositol from D-glucose 6-phosphate: step 2/2. This Drosophila pseudoobscura pseudoobscura (Fruit fly) protein is Putative inositol monophosphatase 3.